Consider the following 227-residue polypeptide: ATP-dependent dethiobiotin synthetase BioD (227 aa).

D13–Y18 serves as a coordination point for ATP. T17 is a Mg(2+) binding site. Residue K38 is part of the active site. Residue S42 participates in substrate binding. Residues D55, E116–G119, and N179–N180 contribute to the ATP site. Residues D55 and E116 each contribute to the Mg(2+) site.

It belongs to the dethiobiotin synthetase family. As to quaternary structure, homodimer. The cofactor is Mg(2+).

The protein resides in the cytoplasm. The enzyme catalyses (7R,8S)-7,8-diammoniononanoate + CO2 + ATP = (4R,5S)-dethiobiotin + ADP + phosphate + 3 H(+). It participates in cofactor biosynthesis; biotin biosynthesis; biotin from 7,8-diaminononanoate: step 1/2. Its function is as follows. Catalyzes a mechanistically unusual reaction, the ATP-dependent insertion of CO2 between the N7 and N8 nitrogen atoms of 7,8-diaminopelargonic acid (DAPA, also called 7,8-diammoniononanoate) to form a ureido ring. This is ATP-dependent dethiobiotin synthetase BioD from Clostridium botulinum (strain ATCC 19397 / Type A).